Here is a 245-residue protein sequence, read N- to C-terminus: Tetraspanin-6 (245 aa).

Over 1 to 19 (MASPSRRLQTKPVITCFKS) the chain is Cytoplasmic. The helical transmembrane segment at 20–40 (VLLIYTFIFWITGVILLAVGI) threads the bilayer. The Extracellular portion of the chain corresponds to 41–59 (WGKVSLENYFSLLNEKATN). A helical membrane pass occupies residues 60–80 (VPFVLIGTGTVIILLGTFGCF). Over 81-93 (ATCRASAWMLKLY) the chain is Cytoplasmic. A helical transmembrane segment spans residues 94–114 (AMFLTLIFLVELVAAIIGFVF). At 115–208 (RHEIKNSLKN…IMVMTIIESE (94 aa)) the chain is on the extracellular side. The N-linked (GlcNAc...) asparagine glycan is linked to N134. The helical transmembrane segment at 209 to 229 (MGVVAGISFGVACFQLIGIFL) threads the bilayer. The Cytoplasmic segment spans residues 230 to 245 (AYCLSRAITNNQYEIV).

Belongs to the tetraspanin (TM4SF) family.

The protein localises to the membrane. The protein is Tetraspanin-6 (TSPAN6) of Bos taurus (Bovine).